The chain runs to 564 residues: CTP synthase (564 aa).

Residues 1–272 (MARPKNVKHI…DIRVLKKLGL (272 aa)) are amidoligase domain. S18 provides a ligand contact to CTP. Residue S18 coordinates UTP. 19-24 (SLGKGI) serves as a coordination point for ATP. Y59 provides a ligand contact to L-glutamine. D76 contacts ATP. Residues D76 and E146 each coordinate Mg(2+). Residues 153–155 (DIE), 193–198 (KTKPTQ), and K229 each bind CTP. UTP contacts are provided by residues 193 to 198 (KTKPTQ) and K229. Residues 299–543 (TIAICGKYTE…VAAAKEFAHG (245 aa)) form the Glutamine amidotransferase type-1 domain. An L-glutamine-binding site is contributed by G363. C390 functions as the Nucleophile; for glutamine hydrolysis in the catalytic mechanism. L-glutamine contacts are provided by residues 391 to 394 (LGMQ), E414, and R471. Residues H516 and E518 contribute to the active site.

Belongs to the CTP synthase family. In terms of assembly, homotetramer.

The enzyme catalyses UTP + L-glutamine + ATP + H2O = CTP + L-glutamate + ADP + phosphate + 2 H(+). The catalysed reaction is L-glutamine + H2O = L-glutamate + NH4(+). It catalyses the reaction UTP + NH4(+) + ATP = CTP + ADP + phosphate + 2 H(+). The protein operates within pyrimidine metabolism; CTP biosynthesis via de novo pathway; CTP from UDP: step 2/2. Allosterically activated by GTP, when glutamine is the substrate; GTP has no effect on the reaction when ammonia is the substrate. The allosteric effector GTP functions by stabilizing the protein conformation that binds the tetrahedral intermediate(s) formed during glutamine hydrolysis. Inhibited by the product CTP, via allosteric rather than competitive inhibition. Functionally, catalyzes the ATP-dependent amination of UTP to CTP with either L-glutamine or ammonia as the source of nitrogen. Regulates intracellular CTP levels through interactions with the four ribonucleotide triphosphates. The sequence is that of CTP synthase from Prosthecochloris aestuarii (strain DSM 271 / SK 413).